The following is a 207-amino-acid chain: ATP-dependent dethiobiotin synthetase BioD (207 aa).

D11 to F16 contributes to the ATP binding site. T15 is a Mg(2+) binding site. K31 is an active-site residue. S35 is a substrate binding site. Residues D42, E95–G98, and N155–Q156 contribute to the ATP site. The Mg(2+) site is built by D42 and E95.

The protein belongs to the dethiobiotin synthetase family. In terms of assembly, homodimer. Requires Mg(2+) as cofactor.

The protein localises to the cytoplasm. The enzyme catalyses (7R,8S)-7,8-diammoniononanoate + CO2 + ATP = (4R,5S)-dethiobiotin + ADP + phosphate + 3 H(+). It participates in cofactor biosynthesis; biotin biosynthesis; biotin from 7,8-diaminononanoate: step 1/2. Its function is as follows. Catalyzes a mechanistically unusual reaction, the ATP-dependent insertion of CO2 between the N7 and N8 nitrogen atoms of 7,8-diaminopelargonic acid (DAPA, also called 7,8-diammoniononanoate) to form a ureido ring. This is ATP-dependent dethiobiotin synthetase BioD from Chlamydia abortus (strain DSM 27085 / S26/3) (Chlamydophila abortus).